A 547-amino-acid polypeptide reads, in one-letter code: Chaperonin GroEL (547 aa).

ATP is bound by residues 29 to 32 (TLGP), 86 to 90 (DGTTT), G413, and D498.

The protein belongs to the chaperonin (HSP60) family. In terms of assembly, forms a cylinder of 14 subunits composed of two heptameric rings stacked back-to-back. Interacts with the co-chaperonin GroES.

It is found in the cytoplasm. The catalysed reaction is ATP + H2O + a folded polypeptide = ADP + phosphate + an unfolded polypeptide.. Functionally, together with its co-chaperonin GroES, plays an essential role in assisting protein folding. The GroEL-GroES system forms a nano-cage that allows encapsulation of the non-native substrate proteins and provides a physical environment optimized to promote and accelerate protein folding. The protein is Chaperonin GroEL of Herpetosiphon aurantiacus (strain ATCC 23779 / DSM 785 / 114-95).